The sequence spans 291 residues: ATP synthase gamma chain (291 aa).

Belongs to the ATPase gamma chain family. In terms of assembly, F-type ATPases have 2 components, CF(1) - the catalytic core - and CF(0) - the membrane proton channel. CF(1) has five subunits: alpha(3), beta(3), gamma(1), delta(1), epsilon(1). CF(0) has three main subunits: a, b and c.

It localises to the cell inner membrane. In terms of biological role, produces ATP from ADP in the presence of a proton gradient across the membrane. The gamma chain is believed to be important in regulating ATPase activity and the flow of protons through the CF(0) complex. The chain is ATP synthase gamma chain from Burkholderia pseudomallei (strain 1106a).